The sequence spans 584 residues: MTVHIDGIVAIVLFYLLILFVGLWAAWKSKNTSMEGAMDRSEAIMIGGRDIGLLVGGFTMTATWVGGGYINGTAEAVYVPGYGLAWAQAPFGYALSLVIGGLFFAKPMRSRGYVTMLDPFQQMYGKRMGGLLFIPALLGEIFWSAAILSALGATLSVIVDININVSVVVSAVIAVLYTLVGGLYSVAYTDVVQLFCIFLGLWISIPFALLNPAVTDIIVTANQEVYQEPWVGNIQSKDSLIWIDNFLLLMLGGIPWQVYFQRVLSASSATYAQVLSFLAAFGCVLMAIPSVLIGAIGTSTDWNQTSYGLPGPIGKNETDMILPIVLQHLCPPYISFFGLGAVSAAVMSSADSSILSASSMFARNIYHLAFRQEASDKEIVWVMRITIFLFGGAATSMALLAQSIYGLWYLSSDLVYVIIFPQLISVLFVKGTNTYGSIAGYIIGFLLRISGGEPYLHMQPFIYYPGCYLDHSFGDDPVYVQRFPFKTMAMLFSFLGNTGVSYLVKYLFVSGILPPKLDFLDSVVSKHSKEIMDKTFLMNQDNITLSELVHVNPIHSASVSAALTNKEAFEDIEPNPELSKSGND.

The Extracellular segment spans residues 1 to 6 (MTVHID). A helical transmembrane segment spans residues 7–27 (GIVAIVLFYLLILFVGLWAAW). Residues 28-50 (KSKNTSMEGAMDRSEAIMIGGRD) lie on the Cytoplasmic side of the membrane. A helical membrane pass occupies residues 51-71 (IGLLVGGFTMTATWVGGGYIN). Over 72–83 (GTAEAVYVPGYG) the chain is Extracellular. A helical transmembrane segment spans residues 84-104 (LAWAQAPFGYALSLVIGGLFF). The Cytoplasmic portion of the chain corresponds to 105–127 (AKPMRSRGYVTMLDPFQQMYGKR). A helical membrane pass occupies residues 128 to 148 (MGGLLFIPALLGEIFWSAAIL). Topologically, residues 149–166 (SALGATLSVIVDININVS) are extracellular. A helical membrane pass occupies residues 167–187 (VVVSAVIAVLYTLVGGLYSVA). The Cytoplasmic segment spans residues 188 to 193 (YTDVVQ). Residues 194-214 (LFCIFLGLWISIPFALLNPAV) traverse the membrane as a helical segment. Residues 215–239 (TDIIVTANQEVYQEPWVGNIQSKDS) are Extracellular-facing. A helical membrane pass occupies residues 240 to 260 (LIWIDNFLLLMLGGIPWQVYF). Topologically, residues 261–276 (QRVLSASSATYAQVLS) are cytoplasmic. A helical membrane pass occupies residues 277–297 (FLAAFGCVLMAIPSVLIGAIG). Topologically, residues 298–319 (TSTDWNQTSYGLPGPIGKNETD) are extracellular. An N-linked (GlcNAc...) asparagine glycan is attached at N303. A helical transmembrane segment spans residues 320-340 (MILPIVLQHLCPPYISFFGLG). Over 341–378 (AVSAAVMSSADSSILSASSMFARNIYHLAFRQEASDKE) the chain is Cytoplasmic. The helical transmembrane segment at 379 to 399 (IVWVMRITIFLFGGAATSMAL) threads the bilayer. Topologically, residues 400-408 (LAQSIYGLW) are extracellular. Residues 409–429 (YLSSDLVYVIIFPQLISVLFV) form a helical membrane-spanning segment. The Cytoplasmic segment spans residues 430–437 (KGTNTYGS). A helical transmembrane segment spans residues 438 to 458 (IAGYIIGFLLRISGGEPYLHM). At 459–487 (QPFIYYPGCYLDHSFGDDPVYVQRFPFKT) the chain is on the extracellular side. The chain crosses the membrane as a helical span at residues 488 to 508 (MAMLFSFLGNTGVSYLVKYLF). At 509 to 584 (VSGILPPKLD…NPELSKSGND (76 aa)) the chain is on the cytoplasmic side.

Belongs to the sodium:solute symporter (SSF) (TC 2.A.21) family. In terms of processing, phosphorylated. As to expression, specific for cholinergic neurons.

Its subcellular location is the membrane. In terms of biological role, imports choline from the extracellular space to the neuron with high affinity. Rate-limiting step in acetylcholine synthesis. Sodium ion and chloride ion dependent. This chain is High-affinity choline transporter 1 (CHT1), found in Torpedo marmorata (Marbled electric ray).